Here is an 89-residue protein sequence, read N- to C-terminus: UPF0297 protein SEQ_2150 (89 aa).

This sequence belongs to the UPF0297 family.

This is UPF0297 protein SEQ_2150 from Streptococcus equi subsp. equi (strain 4047).